The primary structure comprises 67 residues: uncharacterized protein (67 aa).

A helical membrane pass occupies residues Cys-26–Phe-46.

This sequence belongs to the plectrovirus ORF11 family.

The protein resides in the host membrane. This is an uncharacterized protein from Spiroplasma virus SpV1-C74 (SpV1).